The chain runs to 581 residues: Adenine deaminase (581 aa).

Belongs to the metallo-dependent hydrolases superfamily. Adenine deaminase family. Requires Mn(2+) as cofactor.

The enzyme catalyses adenine + H2O + H(+) = hypoxanthine + NH4(+). This chain is Adenine deaminase, found in Brucella melitensis biotype 1 (strain ATCC 23456 / CCUG 17765 / NCTC 10094 / 16M).